The following is a 314-amino-acid chain: Very long chain fatty acid elongase 4 (314 aa).

A glycan (N-linked (GlcNAc...) asparagine) is linked at Asn20. The next 7 membrane-spanning stretches (helical) occupy residues 42–62 (LMQS…FVWL), 78–98 (VLII…RELF), 127–147 (ALWW…FFIL), 165–185 (MFTL…FFGA), 188–208 (NSFI…GPWI), 217–237 (YLTM…ALSL), and 247–267 (MHWA…NFYI). Residues 275–314 (KPKAGKTAMNGISANGVSKSEKQLMIENGKKQKNGKAKGD) are disordered. The span at 293–304 (KSEKQLMIENGK) shows a compositional bias: basic and acidic residues. A compositionally biased stretch (basic residues) spans 305–314 (KQKNGKAKGD). The Di-lysine motif motif lies at 310–314 (KAKGD).

It belongs to the ELO family. ELOVL4 subfamily. As to quaternary structure, oligomer. N-glycosylated. In terms of tissue distribution, expressed in the retina and at much lower level in the brain. Ubiquitous, highest expression in thymus, followed by testis, small intestine, ovary, and prostate. Little or no expression in heart, lung, liver, or leukocates.

The protein resides in the endoplasmic reticulum membrane. The enzyme catalyses a very-long-chain acyl-CoA + malonyl-CoA + H(+) = a very-long-chain 3-oxoacyl-CoA + CO2 + CoA. It catalyses the reaction tetracosanoyl-CoA + malonyl-CoA + H(+) = 3-oxohexacosanoyl-CoA + CO2 + CoA. The catalysed reaction is hexacosanoyl-CoA + malonyl-CoA + H(+) = 3-oxooctacosanyol-CoA + CO2 + CoA. It carries out the reaction octacosanoyl-CoA + malonyl-CoA + H(+) = 3-oxo-triacontanoyl-CoA + CO2 + CoA. The enzyme catalyses triacontanoyl-CoA + malonyl-CoA + H(+) = 3-oxo-dotriacontanoyl-CoA + CO2 + CoA. It catalyses the reaction (19Z,22Z,25Z,28Z,31Z)-tetratriacontapentaenoyl-CoA + malonyl-CoA + H(+) = 3-oxo-(21Z,24Z,27Z,30Z,33Z)-hexatriacontapentaenoyl-CoA + CO2 + CoA. The catalysed reaction is (4Z,7Z,10Z,13Z,16Z,19Z)-docosahexaenoyl-CoA + malonyl-CoA + H(+) = 3-oxo-(6Z,9Z,12Z,15Z,18Z,21Z)-tetracosahexaenoyl-CoA + CO2 + CoA. It carries out the reaction (7Z,10Z,13Z,16Z)-docosatetraenoyl-CoA + malonyl-CoA + H(+) = (9Z,12Z,15Z,18Z)-3-oxotetracosatetraenoyl-CoA + CO2 + CoA. The enzyme catalyses (11Z,14Z,17Z,20Z,23Z)-hexacosapentaenoyl-CoA + malonyl-CoA + H(+) = 3-oxo-(13Z,16Z,19Z,22Z,25Z)-octacosapentaenoyl-CoA + CO2 + CoA. It catalyses the reaction (13Z,16Z,19Z,22Z,25Z)-octacosapentaenoyl-CoA + malonyl-CoA + H(+) = 3-oxo-(15Z,18Z,21Z,24Z,27Z)-triacontapentaenoyl-CoA + CO2 + CoA. The catalysed reaction is (15Z,18Z,21Z,24Z,27Z)-triacontapentaenoyl-CoA + malonyl-CoA + H(+) = 3-oxo-(17Z,20Z,23Z,26Z,29Z)-dotriacontapentaenoyl-CoA + CO2 + CoA. It carries out the reaction (17Z,20Z,23Z,26Z,29Z)-dotriacontapentaenoyl-CoA + malonyl-CoA + H(+) = 3-oxo-(19Z,22Z,25Z,28Z,31Z)-tetratriacontapentaenoyl-CoA + CO2 + CoA. The enzyme catalyses (21Z,24Z,27Z,30Z,33Z)-hexatriacontapentaenoyl-CoA + malonyl-CoA + H(+) = 3-oxo-(23Z,26Z,29Z,32Z,35Z)-octatriacontapentaenoyl-CoA + CO2 + CoA. It catalyses the reaction (11Z,14Z,17Z,20Z)-hexacosatetraenoyl-CoA + malonyl-CoA + H(+) = (13Z,16Z,19Z,22Z)-3-oxooctacosatetraenoyl-CoA + CO2 + CoA. The catalysed reaction is (13Z,16Z,19Z,22Z)-octacosatetraenoyl-CoA + malonyl-CoA + H(+) = 3-oxo-(15Z,18Z,21Z,24Z)-triacontatetraenoyl-CoA + CO2 + CoA. It carries out the reaction (15Z,18Z,21Z,24Z)-triacontatetraenoyl-CoA + malonyl-CoA + H(+) = 3-oxo-(17Z,20Z,23Z,26Z)-dotriacontatetraenoyl-CoA + CO2 + CoA. The enzyme catalyses (17Z,20Z,23Z,26Z)-dotriacontatetraenoyl-CoA + malonyl-CoA + H(+) = 3-oxo-(19Z,22Z,25Z,28Z)-tetratriacontatetraenoyl-CoA + CO2 + CoA. It catalyses the reaction (19Z,22Z,25Z,28Z)-tetratriacontatetraenoyl-CoA + malonyl-CoA + H(+) = 3-oxo-(21Z,24Z,27Z,30Z)-hexatriacontatetraenoyl-CoA + CO2 + CoA. The catalysed reaction is (21Z,24Z,27Z,30Z)-hexatriacontatetraenoyl-CoA + malonyl-CoA + H(+) = 3-oxo-(23Z,26Z,29Z,32Z)-octatriacontatetraenoyl-CoA + CO2 + CoA. It carries out the reaction (6Z,9Z,12Z,15Z,18Z,21Z)-tetracosahexaenoyl-CoA + malonyl-CoA + H(+) = 3-oxo-(8Z,11Z,14Z,17Z,20Z,23Z)-hexacosahexaenoyl-CoA + CO2 + CoA. The enzyme catalyses (8Z,11Z,14Z,17Z,20Z,23Z)-hexacosahexaenoyl-CoA + malonyl-CoA + H(+) = 3-oxo-(10Z,13Z,16Z,19Z,22Z,25Z)-octacosahexaenoyl-CoA + CO2 + CoA. It catalyses the reaction (10Z,13Z,16Z,19Z,22Z,25Z)-octacosahexaenoyl-CoA + malonyl-CoA + H(+) = 3-oxo-(12Z,15Z,18Z,21Z,24Z,27Z)-triacontahexaenoyl-CoA + CO2 + CoA. The catalysed reaction is (12Z,15Z,18Z,21Z,24Z,27Z)-triacontahexaenoyl-CoA + malonyl-CoA + H(+) = 3-oxo-(14Z,17Z,20Z,23Z,26Z,29Z)-dotriacontahexaenoyl-CoA + CO2 + CoA. It carries out the reaction (14Z,17Z,20Z,23Z,26Z,29Z)-dotriacontahexaenoyl-CoA + malonyl-CoA + H(+) = 3-oxo-(16Z,19Z,22Z,25Z,28Z,31Z)-tetratriacontahexaenoyl-CoA + CO2 + CoA. The enzyme catalyses (16Z,19Z,22Z,25Z,28Z,31Z)-tetratriacontahexaenoyl-CoA + malonyl-CoA + H(+) = 3-oxo-(18Z,21Z,24Z,27Z,30Z,33Z)-hexatriacontahexaenoyl-CoA + CO2 + CoA. It catalyses the reaction (9Z,12Z,15Z,18Z,21Z)-tetracosapentaenoyl-CoA + malonyl-CoA + H(+) = 3-oxo-(11Z,14Z,17Z,20Z,23Z)-hexacosapentaenoyl-CoA + CO2 + CoA. The protein operates within lipid metabolism; fatty acid biosynthesis. Functionally, catalyzes the first and rate-limiting reaction of the four reactions that constitute the long-chain fatty acids elongation cycle. This endoplasmic reticulum-bound enzymatic process allows the addition of 2 carbons to the chain of long- and very long-chain fatty acids (VLCFAs) per cycle. Condensing enzyme that catalyzes the synthesis of very long chain saturated (VLC-SFA) and polyunsaturated (PUFA) fatty acids that are involved in multiple biological processes as precursors of membrane lipids and lipid mediators. May play a critical role in early brain and skin development. This is Very long chain fatty acid elongase 4 from Homo sapiens (Human).